The primary structure comprises 802 residues: Peptidyl serine alpha-galactosyltransferase (802 aa).

The signal sequence occupies residues 1–19 (MRWDLITAIVAALVVSVLA). Residues 20–750 (DESGQMAPYR…SEGRFSTLKL (731 aa)) lie on the Extracellular side of the membrane. Asparagine 214, asparagine 275, asparagine 425, and asparagine 637 each carry an N-linked (GlcNAc...) asparagine glycan. The segment at 699–741 (RNCPEPGSESTEKISVSRKVGNIETKQTQGSDETKESSGSSES) is disordered. Residues 751–771 (WVIALWLISGVGFLVVMLLVF) traverse the membrane as a helical segment. Residues 772 to 802 (STRRGRGTTRGKGYRNKRRTSYSNTGFLDTK) lie on the Cytoplasmic side of the membrane. The segment covering 777 to 791 (RGTTRGKGYRNKRRT) has biased composition (basic residues). A disordered region spans residues 777–802 (RGTTRGKGYRNKRRTSYSNTGFLDTK). Polar residues predominate over residues 792–802 (SYSNTGFLDTK).

The protein localises to the endoplasmic reticulum membrane. Glycosyltransferase involved in the O-galactosylation of several proteins including extensins. Catalyzes the transfer of alpha-galactosyl to Ser residues. Hydroxylation of proline residues adjacent to the serine acceptor is required for activity. The protein is Peptidyl serine alpha-galactosyltransferase of Arabidopsis thaliana (Mouse-ear cress).